Consider the following 606-residue polypeptide: Chaperone protein DnaK (606 aa).

Threonine 174 carries the post-translational modification Phosphothreonine; by autocatalysis. The tract at residues 578-606 (YTQAGPQGGTNPGGQGGTDGNVNTDYKVY) is disordered. The segment covering 583 to 596 (PQGGTNPGGQGGTD) has biased composition (gly residues).

The protein belongs to the heat shock protein 70 family.

Functionally, acts as a chaperone. The chain is Chaperone protein DnaK from Caldicellulosiruptor saccharolyticus (strain ATCC 43494 / DSM 8903 / Tp8T 6331).